Reading from the N-terminus, the 80-residue chain is Cell division activator CedA (80 aa).

This sequence belongs to the CedA family.

Its function is as follows. Activates the cell division inhibited by chromosomal DNA over-replication. The sequence is that of Cell division activator CedA from Salmonella choleraesuis (strain SC-B67).